Here is a 401-residue protein sequence, read N- to C-terminus: Tryptophan synthase beta chain (401 aa).

Lys-88 is subject to N6-(pyridoxal phosphate)lysine.

It belongs to the TrpB family. In terms of assembly, tetramer of two alpha and two beta chains. The cofactor is pyridoxal 5'-phosphate.

It carries out the reaction (1S,2R)-1-C-(indol-3-yl)glycerol 3-phosphate + L-serine = D-glyceraldehyde 3-phosphate + L-tryptophan + H2O. The protein operates within amino-acid biosynthesis; L-tryptophan biosynthesis; L-tryptophan from chorismate: step 5/5. Functionally, the beta subunit is responsible for the synthesis of L-tryptophan from indole and L-serine. The protein is Tryptophan synthase beta chain of Shewanella denitrificans (strain OS217 / ATCC BAA-1090 / DSM 15013).